Consider the following 301-residue polypeptide: Uricase (301 aa).

Residues Lys-11 and Thr-58 each act as charge relay system in the active site. The urate site is built by Thr-58, Asp-59, Phe-160, Arg-177, Val-228, Gln-229, and Asn-255. His-257 serves as the catalytic Charge relay system. A Microbody targeting signal motif is present at residues 299–301; the sequence is AKL.

This sequence belongs to the uricase family.

The protein resides in the peroxisome. The enzyme catalyses urate + O2 + H2O = 5-hydroxyisourate + H2O2. It functions in the pathway purine metabolism; urate degradation; (S)-allantoin from urate: step 1/3. Catalyzes the oxidation of uric acid to 5-hydroxyisourate, which is further processed to form (S)-allantoin. In Emericella nidulans (strain FGSC A4 / ATCC 38163 / CBS 112.46 / NRRL 194 / M139) (Aspergillus nidulans), this protein is Uricase (uaZ).